A 163-amino-acid chain; its full sequence is 6,7-dimethyl-8-ribityllumazine synthase (163 aa).

Residues F22, 56–58 (TFE), and 80–82 (AVI) contribute to the 5-amino-6-(D-ribitylamino)uracil site. 85–86 (GT) is a binding site for (2S)-2-hydroxy-3-oxobutyl phosphate. H88 serves as the catalytic Proton donor. A 5-amino-6-(D-ribitylamino)uracil-binding site is contributed by M113. R127 contributes to the (2S)-2-hydroxy-3-oxobutyl phosphate binding site.

Belongs to the DMRL synthase family.

The enzyme catalyses (2S)-2-hydroxy-3-oxobutyl phosphate + 5-amino-6-(D-ribitylamino)uracil = 6,7-dimethyl-8-(1-D-ribityl)lumazine + phosphate + 2 H2O + H(+). Its pathway is cofactor biosynthesis; riboflavin biosynthesis; riboflavin from 2-hydroxy-3-oxobutyl phosphate and 5-amino-6-(D-ribitylamino)uracil: step 1/2. Its function is as follows. Catalyzes the formation of 6,7-dimethyl-8-ribityllumazine by condensation of 5-amino-6-(D-ribitylamino)uracil with 3,4-dihydroxy-2-butanone 4-phosphate. This is the penultimate step in the biosynthesis of riboflavin. The polypeptide is 6,7-dimethyl-8-ribityllumazine synthase (Anaeromyxobacter sp. (strain Fw109-5)).